A 344-amino-acid polypeptide reads, in one-letter code: Putative [LysW]-lysine/[LysW]-ornithine hydrolase (344 aa).

Residue histidine 66 coordinates Zn(2+). Residue aspartate 68 is part of the active site. Position 90 (aspartate 90) interacts with Zn(2+). Residue glutamate 117 is the Proton acceptor of the active site. 3 residues coordinate Zn(2+): glutamate 118, glutamate 139, and histidine 297.

Belongs to the peptidase M20A family. LysK subfamily. It depends on Zn(2+) as a cofactor. Co(2+) serves as cofactor.

The protein resides in the cytoplasm. The catalysed reaction is [amino-group carrier protein]-C-terminal-gamma-(L-lysyl)-L-glutamate + H2O = [amino-group carrier protein]-C-terminal-L-glutamate + L-lysine. It catalyses the reaction [amino-group carrier protein]-C-terminal-gamma-(L-ornithyl)-L-glutamate + H2O = [amino-group carrier protein]-C-terminal-L-glutamate + L-ornithine. Its pathway is amino-acid biosynthesis; L-lysine biosynthesis via AAA pathway; L-lysine from L-alpha-aminoadipate (Thermus route): step 5/5. The protein operates within amino-acid biosynthesis; L-arginine biosynthesis. Its function is as follows. Catalyzes the release of L-lysine from [LysW]-gamma-L-lysine and the release of L-ornithine from [LysW]-L-ornithine. This is Putative [LysW]-lysine/[LysW]-ornithine hydrolase from Thermococcus kodakarensis (strain ATCC BAA-918 / JCM 12380 / KOD1) (Pyrococcus kodakaraensis (strain KOD1)).